Reading from the N-terminus, the 455-residue chain is Argininosuccinate lyase (455 aa).

It belongs to the lyase 1 family. Argininosuccinate lyase subfamily.

It localises to the cytoplasm. It catalyses the reaction 2-(N(omega)-L-arginino)succinate = fumarate + L-arginine. It functions in the pathway amino-acid biosynthesis; L-arginine biosynthesis; L-arginine from L-ornithine and carbamoyl phosphate: step 3/3. The chain is Argininosuccinate lyase from Shewanella baltica (strain OS185).